The chain runs to 763 residues: DEK domain-containing chromatin-associated protein 3 (763 aa).

Disordered regions lie at residues 1–324 and 458–681; these read MGED…RERK and TGDV…SDKV. Positions 11–20 are enriched in polar residues; sequence PTANKTTSLE. Composition is skewed to basic and acidic residues over residues 32 to 44, 72 to 97, 124 to 172, and 180 to 242; these read AGGKETQELAKDE, SEVKKNEDNAETQKMEEKVEVTKDEG, TVMK…KANG, and DIKE…KVED. The stretch at 60–96 forms a coiled coil; the sequence is KDDEKAETEDKESEVKKNEDNAETQKMEEKVEVTKDE. A coiled-coil region spans residues 214-286; sequence GKEKEDKEEN…KEESKGSKKR (73 aa). Residues 243-252 are compositionally biased toward acidic residues; that stretch reads EKEGSEDEND. A compositionally biased stretch (basic and acidic residues) spans 253 to 264; it reads NEKVESKDAKED. The segment covering 265–277 has biased composition (acidic residues); that stretch reads EKEETNDDKEDEK. A Nuclear localization signal 1 motif is present at residues 284-291; the sequence is KKRGKGTS. A compositionally biased stretch (basic and acidic residues) spans 295 to 311; it reads KVREKNKTEEVKKDAEP. Over residues 475–484 the composition is skewed to basic residues; it reads KGAKRKRTPK. A Nuclear localization signal 2 motif is present at residues 483–490; sequence PKKTSPTA. Low complexity predominate over residues 485–496; it reads KTSPTAGSSSSK. A coiled-coil region spans residues 513–551; it reads KKSLAHSDDESEEEKEEEEKQEEEKAEEKEEKKEEENEN. Over residues 521 to 533 the composition is skewed to acidic residues; it reads DESEEEKEEEEKQ. Residues 534-547 are compositionally biased toward basic and acidic residues; that stretch reads EEEKAEEKEEKKEE. Acidic residues predominate over residues 557 to 578; the sequence is SEDEAPQPSESEEKDESEEHSE. 2 stretches are compositionally biased toward low complexity: residues 606–615 and 650–660; these read AVVAAKSSPP and PIKASPAPSKS. Residues 661-681 are compositionally biased toward basic and acidic residues; that stretch reads ASKEKPVKRAGKGKDKPSDKV. The DEK-C domain occupies 676 to 731; it reads KPSDKVLKNAIVEILKRVDFSTATFTDILKELAKEFTEDLTPRKSSIKMIIQEELT. DNA-binding regions lie at residues 694-708 and 723-727; these read DFSTATFTDILKELA and KMIIQ. The stretch at 723–753 forms a coiled coil; that stretch reads KMIIQEELTKLADEEEEEEKKEEDSEKEEAG. Residues 730–763 form a disordered region; it reads LTKLADEEEEEEKKEEDSEKEEAGGSGGGEEVKA. Residues 753–763 show a composition bias toward gly residues; sequence GGSGGGEEVKA.

As to quaternary structure, found in a mRNA splicing-dependent exon junction complex (EJC). Binds specifically histones H3 and H4. Interacts with TOP1A, SCC3, At1g61730, At1g20940, At1g13930, DEK4, HDT1, NIT1, SHL, CYP19-1, GEBPL, HSP70-3, PDP2, PDP3, KIN2, RPL11A and PDS5A. In terms of tissue distribution, highly expressed in young seedlings.

The protein localises to the nucleus. The protein resides in the nucleolus. Chromatin-associated protein which contributes to the modulation of chromatin structure (such as super-helical structure of DNA) and function. Binds to chromatin of protein-coding genes throughout the genome to regulate nucleosome occupancy and chromatin accessibility, and to modulate the expression of target genes. Negative regulator of stress tolerance (e.g. high salt). The polypeptide is DEK domain-containing chromatin-associated protein 3 (Arabidopsis thaliana (Mouse-ear cress)).